The following is a 259-amino-acid chain: Putative hydro-lyase Rxyl_2409 (259 aa).

Residues 1 to 24 (MGAPGAAEARERIRRGEHAGPTAG) form a disordered region. Positions 8 to 18 (EARERIRRGEH) are enriched in basic and acidic residues.

Belongs to the D-glutamate cyclase family.

In Rubrobacter xylanophilus (strain DSM 9941 / JCM 11954 / NBRC 16129 / PRD-1), this protein is Putative hydro-lyase Rxyl_2409.